Consider the following 218-residue polypeptide: 5-oxoprolinase subunit B (218 aa).

This sequence belongs to the PxpB family. As to quaternary structure, forms a complex composed of PxpA, PxpB and PxpC.

The enzyme catalyses 5-oxo-L-proline + ATP + 2 H2O = L-glutamate + ADP + phosphate + H(+). Catalyzes the cleavage of 5-oxoproline to form L-glutamate coupled to the hydrolysis of ATP to ADP and inorganic phosphate. The polypeptide is 5-oxoprolinase subunit B (Escherichia coli O157:H7).